A 570-amino-acid polypeptide reads, in one-letter code: Multidrug and toxin extrusion protein 1 (570 aa).

Met1 is subject to N-acetylmethionine. Topologically, residues 1 to 37 (MEAPEEPAPVRGGPEATLEIHGSRFLRLSAFREELRA) are cytoplasmic. Residues 38 to 58 (LLVLAGPAFLVQLMVFLISFI) form a helical membrane-spanning segment. Over 59 to 72 (SSVFCGHLGKLELD) the chain is Extracellular. A helical transmembrane segment spans residues 73–93 (AVTLAIAVINVTGVSVGFGLS). At 94-120 (SACDTLISQTYGSQNLKHVGVILQRSA) the chain is on the cytoplasmic side. The chain crosses the membrane as a helical span at residues 121 to 141 (LILLLCCFPCWALFLNTQHIL). At 142–152 (LLFRQDPDVSR) the chain is on the extracellular side. A helical transmembrane segment spans residues 153–173 (LTQTYVTIFIPALPATFLYML). Topologically, residues 174–176 (QVK) are cytoplasmic. A helical membrane pass occupies residues 177–197 (YLLNQGIVLPQIVTGVAANLV). The Extracellular segment spans residues 198 to 216 (NALANYLFLHQLHLGAIGS). A helical transmembrane segment spans residues 217–237 (ALANLISQYTLALLLFFYILG). The Cytoplasmic segment spans residues 238–251 (KKLHQATWGGWSLE). The chain crosses the membrane as a helical span at residues 252–272 (CLQDWASFLHLAVPSMLMLCM). The Extracellular segment spans residues 273–295 (EWWAYEVGSFLSGILGMVELGAQ). Residues 296 to 316 (SIVYELAIIVYMVPAGFSVAA) form a helical membrane-spanning segment. The Cytoplasmic segment spans residues 317-336 (SVRVGNALGAGDMEQARKSS). A helical transmembrane segment spans residues 337–357 (TVSLLITVLFAVAFSVLLLSC). At 358–370 (KDHVGYIFTTDRD) the chain is on the extracellular side. A helical membrane pass occupies residues 371-391 (IINLVAQVVPIYAVSHLFEAL). At 392 to 408 (ACTSGGVLRGSGNQKVG) the chain is on the cytoplasmic side. Residues 409 to 429 (AIVNTIGYYVVGLPIGIALMF) traverse the membrane as a helical segment. The Extracellular portion of the chain corresponds to 430 to 437 (ATKLGVMG). Residues 438–458 (LWSGIIICTVFQAVCFLGFII) form a helical membrane-spanning segment. At 459–546 (QLNWKKACQQ…LSRKQLVLRR (88 aa)) the chain is on the cytoplasmic side. Residues 508–534 (DVGKTGETQSDQQMRQEEPLPEHPQDS) form a disordered region. A compositionally biased stretch (basic and acidic residues) spans 521–533 (MRQEEPLPEHPQD). Residues 547–567 (GLLLLGVFLILLVGILVRFYV) form a helical membrane-spanning segment. The Extracellular segment spans residues 568-570 (RIQ).

Belongs to the multi antimicrobial extrusion (MATE) (TC 2.A.66.1) family.

Its subcellular location is the cell membrane. The protein localises to the apical cell membrane. The catalysed reaction is thiamine(out) + H(+)(in) = thiamine(in) + H(+)(out). The enzyme catalyses estrone 3-sulfate(in) + H(+)(out) = estrone 3-sulfate(out) + H(+)(in). It carries out the reaction creatinine(in) + H(+)(out) = creatinine(out) + H(+)(in). It catalyses the reaction agmatine(in) + H(+)(out) = agmatine(out) + H(+)(in). Its function is as follows. Multidrug efflux pump that functions as a H(+)/organic cation antiporter. Plays a physiological role in the excretion of cationic compounds including endogenous metabolites, drugs, toxins through the kidney and liver, into urine and bile respectively. Mediates the efflux of endogenous compounds such as creatinine, vitamin B1/thiamine, agmatine and estrone-3-sulfate. May also contribute to regulate the transport of cationic compounds in testis across the blood-testis-barrier. The chain is Multidrug and toxin extrusion protein 1 (SLC47A1) from Pongo abelii (Sumatran orangutan).